The following is a 364-amino-acid chain: Chorismate synthase (364 aa).

Positions 48 and 54 each coordinate NADP(+). FMN-binding positions include 130–132 (RSS), 242–243 (NA), G287, 302–306 (KPTSS), and R328.

This sequence belongs to the chorismate synthase family. Homotetramer. Requires FMNH2 as cofactor.

It catalyses the reaction 5-O-(1-carboxyvinyl)-3-phosphoshikimate = chorismate + phosphate. Its pathway is metabolic intermediate biosynthesis; chorismate biosynthesis; chorismate from D-erythrose 4-phosphate and phosphoenolpyruvate: step 7/7. Its function is as follows. Catalyzes the anti-1,4-elimination of the C-3 phosphate and the C-6 proR hydrogen from 5-enolpyruvylshikimate-3-phosphate (EPSP) to yield chorismate, which is the branch point compound that serves as the starting substrate for the three terminal pathways of aromatic amino acid biosynthesis. This reaction introduces a second double bond into the aromatic ring system. The chain is Chorismate synthase from Allorhizobium ampelinum (strain ATCC BAA-846 / DSM 112012 / S4) (Agrobacterium vitis (strain S4)).